We begin with the raw amino-acid sequence, 513 residues long: ATP synthase subunit alpha (513 aa).

An ATP-binding site is contributed by 169–176; sequence GDRQIGKT.

The protein belongs to the ATPase alpha/beta chains family. F-type ATPases have 2 components, CF(1) - the catalytic core - and CF(0) - the membrane proton channel. CF(1) has five subunits: alpha(3), beta(3), gamma(1), delta(1), epsilon(1). CF(0) has three main subunits: a(1), b(2) and c(9-12). The alpha and beta chains form an alternating ring which encloses part of the gamma chain. CF(1) is attached to CF(0) by a central stalk formed by the gamma and epsilon chains, while a peripheral stalk is formed by the delta and b chains.

The protein localises to the cell inner membrane. It carries out the reaction ATP + H2O + 4 H(+)(in) = ADP + phosphate + 5 H(+)(out). Functionally, produces ATP from ADP in the presence of a proton gradient across the membrane. The alpha chain is a regulatory subunit. The protein is ATP synthase subunit alpha of Francisella tularensis subsp. novicida (strain U112).